The chain runs to 185 residues: Regulator of rDNA transcription protein 13 (185 aa).

WD repeat units lie at residues 9–48 (GHTD…NNGE), 71–108 (GHRA…LKHF), and 111–148 (HTQL…LVRS).

May be involved in the modulation of rDNA transcription. The chain is Regulator of rDNA transcription protein 13 (RRT13) from Saccharomyces cerevisiae (strain ATCC 204508 / S288c) (Baker's yeast).